We begin with the raw amino-acid sequence, 436 residues long: 3-ketoacyl-CoA thiolase (436 aa).

Catalysis depends on C99, which acts as the Acyl-thioester intermediate. Active-site proton acceptor residues include H392 and C422.

Belongs to the thiolase-like superfamily. Thiolase family. In terms of assembly, heterotetramer of two alpha chains (FadJ) and two beta chains (FadI).

It localises to the cytoplasm. It catalyses the reaction an acyl-CoA + acetyl-CoA = a 3-oxoacyl-CoA + CoA. Its pathway is lipid metabolism; fatty acid beta-oxidation. Its function is as follows. Catalyzes the final step of fatty acid oxidation in which acetyl-CoA is released and the CoA ester of a fatty acid two carbons shorter is formed. In Escherichia coli O9:H4 (strain HS), this protein is 3-ketoacyl-CoA thiolase.